Reading from the N-terminus, the 201-residue chain is Phosphatidylglycerophosphatase and protein-tyrosine phosphatase 1 (201 aa).

The N-terminal 27 residues, 1–27 (MAATALLEAGLARVLFYPTLLYTLFRG), are a transit peptide targeting the mitochondrion. The Tyrosine-protein phosphatase domain occupies 37–188 (WYHRIDPTVL…LKEFHKQITA (152 aa)). C132 acts as the Phosphocysteine intermediate in catalysis.

Belongs to the protein-tyrosine phosphatase family. Non-receptor class dual specificity subfamily. In terms of assembly, interacts with STYXL1; the interaction inhibits PTPMT1 catalytic activity.

It localises to the mitochondrion inner membrane. The catalysed reaction is a 1,2-diacyl-sn-glycero-3-phospho-(1'-sn-glycero-3'-phosphate) + H2O = a 1,2-diacyl-sn-glycero-3-phospho-(1'-sn-glycerol) + phosphate. It catalyses the reaction O-phospho-L-tyrosyl-[protein] + H2O = L-tyrosyl-[protein] + phosphate. It carries out the reaction O-phospho-L-seryl-[protein] + H2O = L-seryl-[protein] + phosphate. The enzyme catalyses O-phospho-L-threonyl-[protein] + H2O = L-threonyl-[protein] + phosphate. The catalysed reaction is 1,2-di-(9Z-octadecenoyl)-sn-glycero-3-phospho-(1'-sn-glycerol-3'-phosphate) + H2O = 1,2-di-(9Z-octadecenoyl)-sn-glycero-3-phospho-(1'-sn-glycerol) + phosphate. It catalyses the reaction 1,2-dioctanoyl-sn-glycero-3-phospho-(1D-myo-inositol-5-phosphate) + H2O = 1,2-dioctanoyl-sn-glycero-3-phospho-(1D-myo-inositol) + phosphate. It carries out the reaction a 1-acyl-2-hexanoyl-sn-glycero-3-phospho-(1D-myo-inositol-5-phosphate) + H2O = a 1-acyl-2-hexanoyl-sn-glycero-3-phospho-(1D-myo-inositol) + phosphate. The enzyme catalyses 1,2-dibutyryl-sn-glycero-3-phospho-(1D-myo-inositol-5-phosphate) + H2O = 1,2-dibutyryl-sn-glycero-3-phospho-(1D-myo-inositol) + phosphate. Its pathway is phospholipid metabolism; phosphatidylglycerol biosynthesis; phosphatidylglycerol from CDP-diacylglycerol: step 2/2. In terms of biological role, lipid phosphatase which dephosphorylates phosphatidylglycerophosphate (PGP) to phosphatidylglycerol (PG). PGP is an essential intermediate in the biosynthetic pathway of cardiolipin, a mitochondrial-specific phospholipid regulating the membrane integrity and activities of the organelle. Has also been shown to display phosphatase activity toward phosphoprotein substrates, specifically mediates dephosphorylation of mitochondrial proteins, thereby playing an essential role in ATP production. Has probably a preference for proteins phosphorylated on Ser and/or Thr residues compared to proteins phosphorylated on Tyr residues. Probably involved in regulation of insulin secretion in pancreatic beta cells. May prevent intrinsic apoptosis, probably by regulating mitochondrial membrane integrity. This is Phosphatidylglycerophosphatase and protein-tyrosine phosphatase 1 from Homo sapiens (Human).